We begin with the raw amino-acid sequence, 323 residues long: MIRSVVRGFGAALPKRVMTNRDMEQVVDTSDDWIVQRTGIRQRYIAGEGETTASLGEQAARAALANAGLTADDLDMIIVATSTPDNTFPATAVNIQNRLGMHHGFAFDVQAVCSGFVYAVTTADAYIRGGVAKRVLVIGAETFSRILDWTDRTTCVLFGDGAGALILEAGEGTGANTDRGVLTASLRSDGAHKDKLYVDGGPSSTGTVGVLHMAGREVFKHAVGMITDVIEATFKAADVTADDLDWLVPHQANRRIIDGSAKKLGIAPEKVVVTVDLHGNTSAASIPLALAVAAGDGRIKRGDLVMLEAMGGGFTWGAVLLRW.

Active-site residues include C113 and H250. The interval 251-255 is ACP-binding; the sequence is QANRR. N280 is an active-site residue.

The protein belongs to the thiolase-like superfamily. FabH family. In terms of assembly, homodimer.

It is found in the cytoplasm. It catalyses the reaction malonyl-[ACP] + acetyl-CoA + H(+) = 3-oxobutanoyl-[ACP] + CO2 + CoA. The protein operates within lipid metabolism; fatty acid biosynthesis. Its function is as follows. Catalyzes the condensation reaction of fatty acid synthesis by the addition to an acyl acceptor of two carbons from malonyl-ACP. Catalyzes the first condensation reaction which initiates fatty acid synthesis and may therefore play a role in governing the total rate of fatty acid production. Possesses both acetoacetyl-ACP synthase and acetyl transacylase activities. Its substrate specificity determines the biosynthesis of branched-chain and/or straight-chain of fatty acids. The protein is Beta-ketoacyl-[acyl-carrier-protein] synthase III of Rhizobium rhizogenes (strain K84 / ATCC BAA-868) (Agrobacterium radiobacter).